We begin with the raw amino-acid sequence, 926 residues long: Isoleucine--tRNA ligase (926 aa).

The short motif at 57-67 (PYANGNIHMGH) is the 'HIGH' region element. Residue Glu-555 participates in L-isoleucyl-5'-AMP binding. The 'KMSKS' region motif lies at 596-600 (KMSKS). Lys-599 serves as a coordination point for ATP. Residues Cys-897, Cys-900, Cys-914, and Cys-917 each contribute to the Zn(2+) site.

Belongs to the class-I aminoacyl-tRNA synthetase family. IleS type 1 subfamily. As to quaternary structure, monomer. It depends on Zn(2+) as a cofactor.

It localises to the cytoplasm. It carries out the reaction tRNA(Ile) + L-isoleucine + ATP = L-isoleucyl-tRNA(Ile) + AMP + diphosphate. Its function is as follows. Catalyzes the attachment of isoleucine to tRNA(Ile). As IleRS can inadvertently accommodate and process structurally similar amino acids such as valine, to avoid such errors it has two additional distinct tRNA(Ile)-dependent editing activities. One activity is designated as 'pretransfer' editing and involves the hydrolysis of activated Val-AMP. The other activity is designated 'posttransfer' editing and involves deacylation of mischarged Val-tRNA(Ile). In Natranaerobius thermophilus (strain ATCC BAA-1301 / DSM 18059 / JW/NM-WN-LF), this protein is Isoleucine--tRNA ligase.